We begin with the raw amino-acid sequence, 815 residues long: Probable E3 ubiquitin-protein ligase hulA (815 aa).

A C2 domain is found at 1-112; the sequence is MGSNLPSQPN…EMGGDEMLTR (112 aa). Disordered stretches follow at residues 134–237 and 253–353; these read NLST…GWER and RTTT…YFVD. Composition is skewed to low complexity over residues 165-185 and 202-212; these read ASAA…SNPS and APGAAAGATPT. Polar residues-rich tracts occupy residues 213 to 226 and 253 to 270; these read NTQG…SFED and RTTT…QTQR. Residues 229–262 form the WW 1 domain; sequence GRLPAGWERREDNLGRTYYVDHNTRTTTWTRPSS. Residues 279–294 show a composition bias toward basic and acidic residues; that stretch reads LERRAHQSRMLPEDRT. Polar residues predominate over residues 295 to 308; it reads GANSPNLPETSQQA. Residues 324-333 show a composition bias toward low complexity; that stretch reads ATGATTAGTG. WW domains follow at residues 333-366 and 393-426; these read GELP…DPRR and GPLP…DPRL. The region spanning 482–815 is the HECT domain; sequence SASDLKKRLM…VEETLGFGQE (334 aa). Cys783 acts as the Glycyl thioester intermediate in catalysis.

It belongs to the RSP5/NEDD4 family. In terms of assembly, interacts with creD.

It is found in the cytoplasm. The catalysed reaction is S-ubiquitinyl-[E2 ubiquitin-conjugating enzyme]-L-cysteine + [acceptor protein]-L-lysine = [E2 ubiquitin-conjugating enzyme]-L-cysteine + N(6)-ubiquitinyl-[acceptor protein]-L-lysine.. Its pathway is protein modification; protein ubiquitination. Functionally, E3 ubiquitin-protein ligase which accepts ubiquitin from an E2 ubiquitin-conjugating enzyme in the form of a thioester and then directly transfers the ubiquitin to targeted substrates. Probably involved in the regulatory network controlling carbon source utilization. The chain is Probable E3 ubiquitin-protein ligase hulA (hulA) from Aspergillus clavatus (strain ATCC 1007 / CBS 513.65 / DSM 816 / NCTC 3887 / NRRL 1 / QM 1276 / 107).